A 181-amino-acid chain; its full sequence is Large ribosomal subunit protein uL10 (181 aa).

Belongs to the universal ribosomal protein uL10 family. As to quaternary structure, part of the ribosomal stalk of the 50S ribosomal subunit. The N-terminus interacts with L11 and the large rRNA to form the base of the stalk. The C-terminus forms an elongated spine to which L12 dimers bind in a sequential fashion forming a multimeric L10(L12)X complex.

Functionally, forms part of the ribosomal stalk, playing a central role in the interaction of the ribosome with GTP-bound translation factors. This chain is Large ribosomal subunit protein uL10, found in Amoebophilus asiaticus (strain 5a2).